The sequence spans 448 residues: Protein chibby homolog 2 (448 aa).

Ser-41, Ser-86, Ser-89, Ser-97, Ser-124, Ser-144, Ser-148, and Ser-150 each carry phosphoserine. The stretch at 164–198 forms a coiled coil; the sequence is KECMLQEENKSLREENKALREENRMLSKENKILQV. Residues Ser-212 and Ser-225 each carry the phosphoserine modification. Residues 242 to 267 adopt a coiled-coil conformation; it reads KEDSTLQLLREENRALQQLLEQKQAY. The interval 270 to 323 is disordered; sequence QAEDTAAPAEESKPAPSPHEEPCSPGLLQDQGSGLSSRFEEPKGPPARQEDSKE. Basic and acidic residues-rich tracts occupy residues 279 to 291 and 307 to 323; these read EESKPAPSPHEEP and RFEEPKGPPARQEDSKE. Ser-335 and Ser-338 each carry phosphoserine. The stretch at 356-414 forms a coiled coil; it reads LQLLREMRQALQALLKENRLLQEENRTLQVLRAEHRGFQEENKALWENNKLKLQQKLVI.

It belongs to the chibby family. SPERT subfamily. As to quaternary structure, homodimer. Binds to NEK1. Testis-specific.

The sequence is that of Protein chibby homolog 2 from Homo sapiens (Human).